Here is an 876-residue protein sequence, read N- to C-terminus: Probable LRR receptor-like protein kinase At1g51890 (876 aa).

Residues 1-19 form the signal peptide; it reads MRFLSFLIFVFAVLGLVQA. The Extracellular segment spans residues 20-500; sequence QDQSGFISLD…TGKNSTNVVA (481 aa). N-linked (GlcNAc...) asparagine glycosylation is found at Asn45, Asn90, Asn138, Asn177, Asn251, Asn259, Asn284, Asn290, Asn327, Asn335, Asn397, Asn412, and Asn417. LRR repeat units follow at residues 407 to 430, 431 to 453, and 455 to 476; these read QIIS…SKLT, HLRE…FSDM, and NLTL…ETLQ. N-linked (GlcNAc...) asparagine glycans are attached at residues Asn455, Asn460, Asn468, Asn481, and Asn494. A helical transmembrane segment spans residues 501-521; that stretch reads IAASVASVFAVLVILAIVFVV. The Cytoplasmic segment spans residues 522-872; that stretch reads IRKKQRTNEA…FSPSSASDFS (351 aa). Position 561 is a phosphothreonine (Thr561). A Protein kinase domain is found at 570 to 842; sequence KNFERVLGKG…HVVMELNECL (273 aa). ATP is bound by residues 576-584 and Lys597; that span reads LGKGGFGTV. At Tyr642 the chain carries Phosphotyrosine. Asp694 functions as the Proton acceptor in the catalytic mechanism. A phosphothreonine mark is found at Thr729 and Thr734. Tyr742 carries the post-translational modification Phosphotyrosine.

The protein belongs to the protein kinase superfamily. Ser/Thr protein kinase family.

The protein resides in the cell membrane. It carries out the reaction L-seryl-[protein] + ATP = O-phospho-L-seryl-[protein] + ADP + H(+). The catalysed reaction is L-threonyl-[protein] + ATP = O-phospho-L-threonyl-[protein] + ADP + H(+). This is Probable LRR receptor-like protein kinase At1g51890 from Arabidopsis thaliana (Mouse-ear cress).